Reading from the N-terminus, the 430-residue chain is MDERLLGPPPPGGGRGGLGLVSGEPGGPGEPPGGGDPGGGSGGVPGGRGKQDIGDILQQIMTITDQSLDEAQAKKHALNCHRMKPALFSVLCEIKEKTGLSIRSSQEEEPVDPQLMRLDNMLLAEGVAGPEKGGGSAAAAAAAAASGGGVSPDNSIEHSDYRSKLAQIRHIYHSELEKYEQACNEFTTHVMNLLREQSRTRPVAPKEMERMVSIIHRKFSAIQMQLKQSTCEAVMILRSRFLDARRKRRNFSKQATEVLNEYFYSHLSNPYPSEEAKEELAKKCGITVSQVSNWFGNKRIRYKKNIGKFQEEANIYAVKTAVSVTQGGHSRTSSPTPPSSAGSGGSFNLSGSGDMFLGMPGLNGDSYSASQVESLRHSMGPGGYGDNLGGGQMYSPREMRANGSWQEAVTPSSVTSPTEGPGSVHSDTSN.

The interval 1-52 (MDERLLGPPPPGGGRGGLGLVSGEPGGPGEPPGGGDPGGGSGGVPGGRGKQD) is disordered. A compositionally biased stretch (gly residues) spans 13–48 (GGRGGLGLVSGEPGGPGEPPGGGDPGGGSGGVPGGR). The 196-residue stretch at 48 to 243 (RGKQDIGDIL…VMILRSRFLD (196 aa)) folds into the PBC domain. The tract at residues 55–134 (DILQQIMTIT…EGVAGPEKGG (80 aa)) is PBC-A. Phosphoserine occurs at positions 136, 151, and 159. The segment at 137–243 (AAAAAAAAAS…VMILRSRFLD (107 aa)) is PBC-B. The homeobox; TALE-type DNA-binding region spans 244–306 (ARRKRRNFSK…NKRIRYKKNI (63 aa)). 2 disordered regions span residues 326-347 (QGGHSRTSSPTPPSSAGSGGSF) and 378-430 (SMGP…DTSN). The residue at position 330 (serine 330) is a Phosphoserine. Gly residues predominate over residues 380 to 392 (GPGGYGDNLGGGQ). Serine 395 bears the Phosphoserine mark. A compositionally biased stretch (polar residues) spans 403 to 418 (GSWQEAVTPSSVTSPT).

Belongs to the TALE/PBX homeobox family. In terms of assembly, forms heterodimers with MEIS1 and heterotrimers with MEIS1 and HOXA9. Interacts with PBXIP1. In terms of tissue distribution, ubiquitously expressed.

The protein localises to the nucleus. Its function is as follows. Transcriptional activator that binds the sequence 5'-ATCAATCAA-3'. Activates transcription of PF4 in complex with MEIS1. The sequence is that of Pre-B-cell leukemia transcription factor 2 (PBX2) from Homo sapiens (Human).